The sequence spans 189 residues: Adenylate kinase (189 aa).

10-15 (AAGKGT) lines the ATP pocket. The NMP stretch occupies residues 30-59 (STGDMLRAARASGSELGQRVAKIMDEGGLV). Residues T31, R36, 57–59 (GLV), 85–88 (GFPR), and Q92 contribute to the AMP site. Residues 126-136 (KRFEEQGRADD) are LID. Position 127 (R127) interacts with ATP. Residues R133 and R144 each coordinate AMP. G172 contributes to the ATP binding site.

The protein belongs to the adenylate kinase family. As to quaternary structure, monomer.

The protein localises to the cytoplasm. The catalysed reaction is AMP + ATP = 2 ADP. It participates in purine metabolism; AMP biosynthesis via salvage pathway; AMP from ADP: step 1/1. Catalyzes the reversible transfer of the terminal phosphate group between ATP and AMP. Plays an important role in cellular energy homeostasis and in adenine nucleotide metabolism. The chain is Adenylate kinase from Hyphomonas neptunium (strain ATCC 15444).